Here is a 128-residue protein sequence, read N- to C-terminus: SH2 domain-containing protein 1A (128 aa).

One can recognise an SH2 domain in the interval 6–102; sequence VYHGKISRET…GIVIPLQYPV (97 aa). Positions 67–92 are interaction with FYN SH3 domain; it reads ETAPGVHKRFFRKIKNLISAFQKPDQ. Residue K89 is modified to N6-acetyllysine. Residues 104 to 128 form a disordered region; that stretch reads KKPSARSTQGATGRRDDPDVFLKTP. The span at 116–128 shows a compositional bias: basic and acidic residues; sequence GRRDDPDVFLKTP.

In terms of assembly, interacts with CD84, CD244, LY9, SLAMF1 and FYN. Interacts with NTRK1, NTRK2 and NTRK3.

It is found in the cytoplasm. Cytoplasmic adapter regulating receptors of the signaling lymphocytic activation molecule (SLAM) family such as SLAMF1, CD244, LY9, CD84, SLAMF6 and SLAMF7. In SLAM signaling seems to cooperate with SH2D1B/EAT-2. Initially it has been proposed that association with SLAMF1 prevents SLAMF1 binding to inhibitory effectors including INPP5D/SHIP1 and PTPN11/SHP-2. However, by simultaneous interactions, recruits FYN which subsequently phosphorylates and activates SLAMF1. Positively regulates CD244/2B4- and CD84-mediated natural killer (NK) cell functions. Can also promote CD48-, SLAMF6 -, LY9-, and SLAMF7-mediated NK cell activation. In the context of NK cell-mediated cytotoxicity enhances conjugate formation with target cells. May also regulate the activity of the neurotrophin receptors NTRK1, NTRK2 and NTRK3. This Bos taurus (Bovine) protein is SH2 domain-containing protein 1A (SH2D1A).